We begin with the raw amino-acid sequence, 466 residues long: Communesin N16 acyltransferase cnsK (466 aa).

This sequence belongs to the fumigaclavine B O-acetyltransferase family.

It participates in alkaloid biosynthesis. Its function is as follows. Communesin N16 acyltransferase; part of the gene cluster that mediates the biosynthesis of communesins, a prominent class of indole alkaloids with great potential as pharmaceuticals. Communesins are biosynthesized by the coupling of tryptamine and aurantioclavine, two building blocks derived from L-tryptophan. The L-tryptophan decarboxylase cnsB converts L-tryptophan to tryptamine, whereas the tryptophan dimethylallyltransferase cnsF converts L-tryptophan to 4-dimethylallyl tryptophan which is further transformed to aurantioclavine by the aurantioclavine synthase cnsA, probably aided by the catalase cnsD. The cytochrome P450 monooxygenase cnsC catalyzes the heterodimeric coupling between the two different indole moieties, tryptamine and aurantioclavine, to construct vicinal quaternary stereocenters and yield the heptacyclic communesin scaffold. The O-methyltransferase cnsE then methylates the communesin scaffold to produce communesin K, the simplest characterized communesin that contains the heptacyclic core. The dioxygenase cnsJ converts communesin K into communesin I. Acylation to introduce the hexadienyl group at position N16 of communesin I by the acyltransferase cnsK leads to the production of communesin B. The hexadienyl group is produced by the highly reducing polyketide synthase cnsI, before being hydrolytically removed from cnsI by the serine hydrolase cnsH, converted into hexadienyl-CoA by the CoA ligase cnsG, and then transferred to communesin I by cnsK. Surprisingly, cnsK may also be a promiscuous acyltransferase that can tolerate a range of acyl groups, including acetyl-, propionyl-, and butyryl-CoA, which lead to communesins A, G and H respectively. The roles of the alpha-ketoglutarate-dependent dioxygenases cnsM and cnsP have still to be determined. This chain is Communesin N16 acyltransferase cnsK, found in Penicillium expansum (Blue mold rot fungus).